Reading from the N-terminus, the 162-residue chain is MSRVNPADLNLTDRVVHISRVAKVVKGGRRFSFSALIVVGDGCGYVGYGLGKANEVPEAIRKGVEQAKKNLIKVPVNQNQTIPFEIEGKFGAGRLLMKPASAGTGVIAGGAARAIFEAAGINNILSKCLGSNNPHNVVKAAFAGLQRLKSPEELAARRGITE.

One can recognise an S5 DRBM domain in the interval Leu11–Val74.

It belongs to the universal ribosomal protein uS5 family. As to quaternary structure, part of the 30S ribosomal subunit. Contacts proteins S4 and S8.

In terms of biological role, with S4 and S12 plays an important role in translational accuracy. Located at the back of the 30S subunit body where it stabilizes the conformation of the head with respect to the body. This chain is Small ribosomal subunit protein uS5, found in Pelobacter propionicus (strain DSM 2379 / NBRC 103807 / OttBd1).